A 124-amino-acid polypeptide reads, in one-letter code: KESAAAKFERQHMDPSMSSASSSNYCNQMMQSRKMTQDRCKPVNTFVHESLADVQAVCFQKNVACKNGQSNCYQSNSAMHITDCRESGNSKYPNCVYKATQAEKHIIVACEGNPYVPVHFDASV.

A compositionally biased stretch (basic and acidic residues) spans 1 to 13 (KESAAAKFERQHM). The tract at residues 1-24 (KESAAAKFERQHMDPSMSSASSSN) is disordered. Substrate is bound by residues lysine 7 and arginine 10. Histidine 12 functions as the Proton acceptor in the catalytic mechanism. 4 cysteine pairs are disulfide-bonded: cysteine 26-cysteine 84, cysteine 40-cysteine 95, cysteine 58-cysteine 110, and cysteine 65-cysteine 72. Residues 41-45 (KPVNT), lysine 66, and arginine 85 contribute to the substrate site. Histidine 119 (proton donor) is an active-site residue.

Belongs to the pancreatic ribonuclease family. In terms of assembly, monomer. Interacts with and forms tight 1:1 complexes with RNH1. Dimerization of two such complexes may occur. Interaction with RNH1 inhibits this protein. In terms of tissue distribution, pancreas.

It is found in the secreted. The enzyme catalyses an [RNA] containing cytidine + H2O = an [RNA]-3'-cytidine-3'-phosphate + a 5'-hydroxy-ribonucleotide-3'-[RNA].. It carries out the reaction an [RNA] containing uridine + H2O = an [RNA]-3'-uridine-3'-phosphate + a 5'-hydroxy-ribonucleotide-3'-[RNA].. Its function is as follows. Endonuclease that catalyzes the cleavage of RNA on the 3' side of pyrimidine nucleotides. Acts on single-stranded and double-stranded RNA. This chain is Ribonuclease pancreatic (RNASE1), found in Dama dama (Fallow deer).